The chain runs to 974 residues: UvrABC system protein A (974 aa).

An ATP-binding site is contributed by 34-41 (GLSGSGKS). ABC transporter domains are found at residues 331-610 (WARS…TNSL) and 630-959 (ISKT…QFLK). 663 to 670 (GVSGGGKS) serves as a coordination point for ATP. The segment at 762 to 788 (CEACQGDGVIKIEMHFLPDVYVTCDVC) adopts a C4-type zinc-finger fold.

This sequence belongs to the ABC transporter superfamily. UvrA family. In terms of assembly, forms a heterotetramer with UvrB during the search for lesions.

It localises to the cytoplasm. In terms of biological role, the UvrABC repair system catalyzes the recognition and processing of DNA lesions. UvrA is an ATPase and a DNA-binding protein. A damage recognition complex composed of 2 UvrA and 2 UvrB subunits scans DNA for abnormalities. When the presence of a lesion has been verified by UvrB, the UvrA molecules dissociate. The chain is UvrABC system protein A from Brucella suis biovar 1 (strain 1330).